The primary structure comprises 486 residues: Vicilin-like seed storage protein At3g22640 (486 aa).

Residues 1–22 (MAITNKLIITLLLLISIAVVHC) form the signal peptide. Residues 34-60 (PPQQGEQEGPRRRPGGGSGEGWEEEST) are disordered. 2 Cupin type-1 domains span residues 64-223 (YHFR…ELLG) and 278-448 (FNLF…KVAE). 3 N-linked (GlcNAc...) asparagine glycosylation sites follow: Asn-168, Asn-316, and Asn-455.

Belongs to the 7S seed storage protein family. Predominantly expressed in the embryo and endosperm of developing seeds. Also present in seedlings.

Seed storage protein. Functionally, (Microbial infection) Involved in tobacco mosaic virus (TMV) replication. Required for endoplasmic reticulum (ER) aggregations mediated by TMV main replicase (P126) upon viral infection. The polypeptide is Vicilin-like seed storage protein At3g22640 (Arabidopsis thaliana (Mouse-ear cress)).